Consider the following 365-residue polypeptide: Protein YIM1 (365 aa).

Belongs to the YIM1 family.

It is found in the lipid droplet. Its subcellular location is the mitochondrion. The protein is Protein YIM1 (YIM1) of Saccharomyces cerevisiae (strain ATCC 204508 / S288c) (Baker's yeast).